The following is a 101-amino-acid chain: Small ribosomal subunit protein bS18c (101 aa).

This sequence belongs to the bacterial ribosomal protein bS18 family. Part of the 30S ribosomal subunit.

It is found in the plastid. Its subcellular location is the chloroplast. This Arabidopsis thaliana (Mouse-ear cress) protein is Small ribosomal subunit protein bS18c (rps18).